Here is a 475-residue protein sequence, read N- to C-terminus: Glutamate--tRNA ligase (475 aa).

The 'HIGH' region signature appears at 9–19; sequence PSPTGYLHVGG. Residues 240–244 carry the 'KMSKS' region motif; the sequence is KLSKR. K243 contributes to the ATP binding site.

The protein belongs to the class-I aminoacyl-tRNA synthetase family. Glutamate--tRNA ligase type 1 subfamily. Monomer.

The protein localises to the cytoplasm. The enzyme catalyses tRNA(Glu) + L-glutamate + ATP = L-glutamyl-tRNA(Glu) + AMP + diphosphate. Functionally, catalyzes the attachment of glutamate to tRNA(Glu) in a two-step reaction: glutamate is first activated by ATP to form Glu-AMP and then transferred to the acceptor end of tRNA(Glu). This Vibrio campbellii (strain ATCC BAA-1116) protein is Glutamate--tRNA ligase.